Here is a 480-residue protein sequence, read N- to C-terminus: Glutamate--tRNA ligase (480 aa).

The 'HIGH' region motif lies at 21–31; it reads PSPTGYLHVGG. The Zn(2+) site is built by cysteine 110, cysteine 112, cysteine 137, and histidine 139. The 'KMSKS' region motif lies at 248-252; it reads KLSKR. Residue lysine 251 participates in ATP binding.

Belongs to the class-I aminoacyl-tRNA synthetase family. Glutamate--tRNA ligase type 1 subfamily. Monomer. The cofactor is Zn(2+).

It is found in the cytoplasm. It carries out the reaction tRNA(Glu) + L-glutamate + ATP = L-glutamyl-tRNA(Glu) + AMP + diphosphate. Catalyzes the attachment of glutamate to tRNA(Glu) in a two-step reaction: glutamate is first activated by ATP to form Glu-AMP and then transferred to the acceptor end of tRNA(Glu). This Haemophilus influenzae (strain ATCC 51907 / DSM 11121 / KW20 / Rd) protein is Glutamate--tRNA ligase.